An 85-amino-acid polypeptide reads, in one-letter code: Progonadoliberin-2 (85 aa).

The signal sequence occupies residues 1-23 (MCVSRLVLLFGLLLCVGAQLSNA). Q24 is subject to Pyrrolidone carboxylic acid. At G33 the chain carries Glycine amide.

This sequence belongs to the GnRH family.

Its subcellular location is the secreted. Its function is as follows. Stimulates the secretion of gonadotropins. The polypeptide is Progonadoliberin-2 (gnrh2) (Dicentrarchus labrax (European seabass)).